Here is a 164-residue protein sequence, read N- to C-terminus: MNIVDQQTFRDAMSCMGAAVNIITTDGPAGRAGFTASAVCSVTDTPPTLLVCLNRGASVWPVFNENRTLCVNTLSAGQEPLSNLFGGKTPMEHRFAAARWQNGVTGCPQLEEALVSFDCRISQVVSVGTHDILFCAIEAIHRHATPYGLVWFDRSYHALMRPAC.

Belongs to the non-flavoprotein flavin reductase family. RutF subfamily.

The enzyme catalyses FMNH2 + NAD(+) = FMN + NADH + 2 H(+). In terms of biological role, catalyzes the reduction of FMN to FMNH2 which is used to reduce pyrimidine by RutA via the Rut pathway. In Escherichia coli O157:H7, this protein is FMN reductase (NADH) RutF (rutF).